The following is a 160-amino-acid chain: ATP synthase subunit b, chloroplastic (160 aa).

The chain crosses the membrane as a helical span at residues 12-31 (NVINIAILVVILIRFARQVV).

The protein belongs to the ATPase B chain family. In terms of assembly, F-type ATPases have 2 components, F(1) - the catalytic core - and F(0) - the membrane proton channel. F(1) has five subunits: alpha(3), beta(3), gamma(1), delta(1), epsilon(1). F(0) has four main subunits: a(1), b(1), b'(1) and c(10-14). The alpha and beta chains form an alternating ring which encloses part of the gamma chain. F(1) is attached to F(0) by a central stalk formed by the gamma and epsilon chains, while a peripheral stalk is formed by the delta, b and b' chains.

It is found in the plastid. The protein resides in the chloroplast thylakoid membrane. Its function is as follows. F(1)F(0) ATP synthase produces ATP from ADP in the presence of a proton or sodium gradient. F-type ATPases consist of two structural domains, F(1) containing the extramembraneous catalytic core and F(0) containing the membrane proton channel, linked together by a central stalk and a peripheral stalk. During catalysis, ATP synthesis in the catalytic domain of F(1) is coupled via a rotary mechanism of the central stalk subunits to proton translocation. Functionally, component of the F(0) channel, it forms part of the peripheral stalk, linking F(1) to F(0). The protein is ATP synthase subunit b, chloroplastic of Cyanidioschyzon merolae (strain NIES-3377 / 10D) (Unicellular red alga).